We begin with the raw amino-acid sequence, 205 residues long: High frequency lysogenization protein HflD homolog (205 aa).

The protein belongs to the HflD family.

The protein localises to the cytoplasm. The protein resides in the cell inner membrane. This is High frequency lysogenization protein HflD homolog from Haemophilus influenzae (strain ATCC 51907 / DSM 11121 / KW20 / Rd).